The primary structure comprises 132 residues: Transcription antitermination protein NusB (132 aa).

The protein belongs to the NusB family.

In terms of biological role, involved in transcription antitermination. Required for transcription of ribosomal RNA (rRNA) genes. Binds specifically to the boxA antiterminator sequence of the ribosomal RNA (rrn) operons. The sequence is that of Transcription antitermination protein NusB from Campylobacter lari (strain RM2100 / D67 / ATCC BAA-1060).